The chain runs to 235 residues: Calcium-activated potassium channel subunit beta-2 (235 aa).

The interval 1 to 45 (MFIWTSGRTSSSYRHDEKRNIYQKIRDHDLLDKRKTVTALKAGED) is ball and chain. At 1 to 46 (MFIWTSGRTSSSYRHDEKRNIYQKIRDHDLLDKRKTVTALKAGEDR) the chain is on the cytoplasmic side. A helical membrane pass occupies residues 47 to 67 (AILLGLAMMVCSIMMYFLLGI). Over 68–194 (TLLRSYMQSV…VILTKLYSSN (127 aa)) the chain is Extracellular. Residues N88, N96, and N119 are each glycosylated (N-linked (GlcNAc...) asparagine). A helical transmembrane segment spans residues 195–215 (VLFHSLFWPTCMMAGGVAIVA). Residues 216-235 (MVKLTQYLSLLCERIQRINR) lie on the Cytoplasmic side of the membrane.

Belongs to the KCNMB (TC 8.A.14.1) family. KCNMB2 subfamily. In terms of assembly, interacts with KCNMA1 tetramer. There are probably 4 molecules of KCMNB2 per KCNMA1 tetramer. N-glycosylated. As to expression, expressed in kidney, heart and brain. Highly expressed in ovary. Expressed at low level in other tissues.

The protein resides in the membrane. Its function is as follows. Regulatory subunit of the calcium activated potassium KCNMA1 (maxiK) channel. Modulates the calcium sensitivity and gating kinetics of KCNMA1, thereby contributing to KCNMA1 channel diversity. Acts as a negative regulator that confers rapid and complete inactivation of KCNMA1 channel complex. May participate in KCNMA1 inactivation in chromaffin cells of the adrenal gland or in hippocampal CA1 neurons. The protein is Calcium-activated potassium channel subunit beta-2 (KCNMB2) of Homo sapiens (Human).